The chain runs to 285 residues: Phospholipid phosphatase 1 (285 aa).

Residues 1–6 (MFDKTR) lie on the Cytoplasmic side of the membrane. The PDZ-binding; involved in localization to the apical cell membrane motif lies at 5–7 (TRL). A helical membrane pass occupies residues 7–27 (LPYVALDVLCVLLAGLPFAIL). Residues 28–53 (TSRHTPFQRGLFCNDESIKYPYKEDT) are Extracellular-facing. A helical transmembrane segment spans residues 54–74 (IPYPLLGGIIIPFSIIVMIVG). At 75 to 94 (ETLSVYFNLLHSNSFIRNNY) the chain is on the cytoplasmic side. A helical transmembrane segment spans residues 95–115 (IATIYKAIGTFLFGAAASQSL). The Extracellular segment spans residues 116–164 (TDIAKYSIGRLRPHFLDVCDPDWSKINCSDGYIENYICRGNAQKVKEGR). Residues 120–128 (KYSIGRLRP) are phosphatase sequence motif I. N-linked (GlcNAc...) asparagine glycosylation is present at Asn-142. The helical transmembrane segment at 165–185 (LSFYSGHSSFSMYCMLFVALY) threads the bilayer. A phosphatase sequence motif II region spans residues 168 to 171 (YSGH). His-171 functions as the Proton donors in the catalytic mechanism. The Cytoplasmic segment spans residues 186-196 (LQARMKGDWAR). A helical transmembrane segment spans residues 197–216 (LLRPTLQFGLVAVSIYVGLS). A phosphatase sequence motif III region spans residues 216–227 (SRVSDYKHHWSD). Residues 217–229 (RVSDYKHHWSDVL) lie on the Extracellular side of the membrane. His-223 functions as the Nucleophile in the catalytic mechanism. Residues 230–250 (TGLIQGALVAIVVAVYVSDFF) traverse the membrane as a helical segment. Residues 251–285 (KERNSPFKERKEEDSHTTLHETPTTGNHYRNSHQP) lie on the Cytoplasmic side of the membrane. Over residues 257 to 269 (FKERKEEDSHTTL) the composition is skewed to basic and acidic residues. The segment at 257-285 (FKERKEEDSHTTLHETPTTGNHYRNSHQP) is disordered. A compositionally biased stretch (polar residues) spans 270-285 (HETPTTGNHYRNSHQP).

It belongs to the PA-phosphatase related phosphoesterase family. As to quaternary structure, forms functional homodimers and homooligomers that are not required for substrate recognition and catalytic activity. Can also form heterooligomers with PLPP2 and PLPP3. In terms of processing, N-glycosylated. N-linked sugars are of the complex type. N-glycosylation is not required for the phosphatase activity.

Its subcellular location is the cell membrane. The protein localises to the apical cell membrane. It localises to the membrane raft. It is found in the membrane. The protein resides in the caveola. The enzyme catalyses a 1,2-diacyl-sn-glycero-3-phosphate + H2O = a 1,2-diacyl-sn-glycerol + phosphate. It carries out the reaction 1,2-dihexadecanoyl-sn-glycero-3-phosphate + H2O = 1,2-dihexadecanoyl-sn-glycerol + phosphate. The catalysed reaction is 1,2-di-(9Z-octadecenoyl)-sn-glycero-3-phosphate + H2O = 1,2-di-(9Z-octadecenoyl)-sn-glycerol + phosphate. It catalyses the reaction a monoacyl-sn-glycero-3-phosphate + H2O = a monoacylglycerol + phosphate. The enzyme catalyses (9Z)-octadecenoyl-sn-glycero-3-phosphate + H2O = (9Z-octadecenoyl)-glycerol + phosphate. It carries out the reaction a 1-acyl-sn-glycero-3-phosphate + H2O = a 1-acyl-sn-glycerol + phosphate. The catalysed reaction is 1-(9Z-octadecenoyl)-sn-glycero-3-phosphate + H2O = 1-(9Z-octadecenoyl)-sn-glycerol + phosphate. It catalyses the reaction a 1,2-diacyl-sn-glycerol 3-diphosphate + H2O = a 1,2-diacyl-sn-glycero-3-phosphate + phosphate + H(+). The enzyme catalyses sphing-4-enine 1-phosphate + H2O = sphing-4-enine + phosphate. It carries out the reaction an N-acylsphing-4-enine 1-phosphate + H2O = an N-acylsphing-4-enine + phosphate. The catalysed reaction is N-(octanoyl)-sphing-4-enine-1-phosphate + H2O = N-octanoylsphing-4-enine + phosphate. It catalyses the reaction N-(9Z-octadecenoyl)-ethanolamine phosphate + H2O = N-(9Z-octadecenoyl) ethanolamine + phosphate. The enzyme catalyses 1-hexadecanoyl-2-(9Z-octadecenoyl)-sn-glycero-3-phosphate + H2O = 1-hexadecanoyl-2-(9Z-octadecenoyl)-sn-glycerol + phosphate. Its pathway is lipid metabolism; phospholipid metabolism. Magnesium-independent phospholipid phosphatase. Insensitive to N-ethylmaleimide. Functionally, magnesium-independent phospholipid phosphatase of the plasma membrane that catalyzes the dephosphorylation of a variety of glycerolipid and sphingolipid phosphate esters including phosphatidate/PA, lysophosphatidate/LPA, diacylglycerol pyrophosphate/DGPP, sphingosine 1-phosphate/S1P and ceramide 1-phosphate/C1P. Also acts on N-oleoyl ethanolamine phosphate/N-(9Z-octadecenoyl)-ethanolamine phosphate, a potential physiological compound. Through its extracellular phosphatase activity allows both the hydrolysis and the cellular uptake of these bioactive lipid mediators from the milieu, regulating signal transduction in different cellular processes. It is for instance essential for the extracellular hydrolysis of S1P and subsequent conversion into intracellular S1P. Involved in the regulation of inflammation, platelets activation, cell proliferation and migration among other processes. May also have an intracellular activity to regulate phospholipid-mediated signaling pathways. In Sus scrofa (Pig), this protein is Phospholipid phosphatase 1.